The primary structure comprises 445 residues: Argininosuccinate synthase (445 aa).

ATP-binding positions include 17 to 25 (AFSGGLDTS) and Ala43. Residue Tyr99 coordinates L-citrulline. ATP-binding residues include Gly129 and Thr131. The L-aspartate site is built by Thr131, Asn135, and Asp136. Asn135 provides a ligand contact to L-citrulline. Asp136 is a binding site for ATP. L-citrulline contacts are provided by Arg139 and Ser192. Residue Asp194 participates in ATP binding. Positions 201, 203, and 280 each coordinate L-citrulline.

Belongs to the argininosuccinate synthase family. Type 2 subfamily. In terms of assembly, homotetramer.

The protein localises to the cytoplasm. It carries out the reaction L-citrulline + L-aspartate + ATP = 2-(N(omega)-L-arginino)succinate + AMP + diphosphate + H(+). The protein operates within amino-acid biosynthesis; L-arginine biosynthesis; L-arginine from L-ornithine and carbamoyl phosphate: step 2/3. This chain is Argininosuccinate synthase, found in Herminiimonas arsenicoxydans.